The primary structure comprises 408 residues: NFATC2-interacting protein (408 aa).

Residues 1 to 113 (MAEPVGKRGR…LDPGEAPLVP (113 aa)) are disordered. Low complexity predominate over residues 24-40 (QRSPSRGTLDVVSVDLV). A phosphoserine mark is found at S41, S43, S73, S77, S79, S81, and S116. Residues K118 and K120 each participate in a glycyl lysine isopeptide (Lys-Gly) (interchain with G-Cter in SUMO2) cross-link. The disordered stretch occupies residues 141-205 (EEEVELADSS…TKSRKHTRAL (65 aa)). The segment covering 169–181 (RTKDKEEKKKTEI) has biased composition (basic and acidic residues). Residues S187, S190, and S193 each carry the phosphoserine modification. The segment covering 196–205 (TKSRKHTRAL) has biased composition (basic residues). A coiled-coil region spans residues 197 to 220 (KSRKHTRALKKLSEVNKRLQDLRS). A phosphoserine mark is found at S209 and S303. T305 and T307 each carry phosphothreonine. One can recognise a Ubiquitin-like domain in the interval 337 to 408 (LQLRVQGKEK…ESGDLIEVWG (72 aa)). 2 positions are modified to phosphoserine: S358 and S379.

Interacts with NFATC2, TRAF1, TRAF2 and PRMT1. Interacts with UBE2I/UBC9. Post-translationally, methylation at the N-terminus by PRMT1 modulates interaction with the NFAT complex and results in augmented cytokine production.

The protein resides in the nucleus. The protein localises to the cytoplasm. In terms of biological role, in T-helper 2 (Th2) cells, regulates the magnitude of NFAT-driven transcription of a specific subset of cytokine genes, including IL3, IL4, IL5 and IL13, but not IL2. Recruits PRMT1 to the IL4 promoter; this leads to enhancement of histone H4 'Arg-3'-methylation and facilitates subsequent histone acetylation at the IL4 locus, thus promotes robust cytokine expression. Down-regulates formation of poly-SUMO chains by UBE2I/UBC9. This Macaca fascicularis (Crab-eating macaque) protein is NFATC2-interacting protein (NFATC2IP).